The sequence spans 294 residues: Equatorin (294 aa).

Positions 1–14 (MNFILFIFIPGVFS) are cleaved as a signal peptide. Topologically, residues 15-181 (LKSSTLKPTI…QPDLEDLKIK (167 aa)) are vesicular. The N-linked (GlcNAc...) asparagine glycan is linked to Asn76. Residues 107–126 (KSTIEEETTTSEPSHKNIQR) are disordered. The N-linked (GlcNAc...) asparagine glycan is linked to Asn143. The chain crosses the membrane as a helical span at residues 182 to 202 (IMLGISLMTLLLFVVLLAFCS). The Cytoplasmic segment spans residues 203-294 (ATLYKLRHLS…MHENDESVTR (92 aa)).

In terms of assembly, interacts with SNAP25. Highly N- and O-glycosylated; contains sialic acid. In terms of tissue distribution, isoform 1 is highly expressed in testis. Isoform 2 is expressed at low levels in skin and blood.

The protein resides in the cytoplasmic vesicle. It localises to the secretory vesicle. It is found in the acrosome membrane. The protein localises to the acrosome inner membrane. Its subcellular location is the acrosome outer membrane. Acrosomal membrane-anchored protein involved in the process of fertilization and in acrosome biogenesis. The polypeptide is Equatorin (EQTN) (Homo sapiens (Human)).